The primary structure comprises 606 residues: Serine/threonine-protein kinase A-Raf (606 aa).

Residues 19–91 enclose the RBD domain; it reads GTVKVYLPNK…DGEELIVEVL (73 aa). The Phorbol-ester/DAG-type zinc finger occupies 98-144; sequence MHNFVRKTFFSLAFCDFCLKFLFHGFRCQTCGYKFHQHCSSKVPTVC. Residues His-99, Cys-112, Cys-115, Cys-125, Cys-128, His-133, Cys-136, and Cys-144 each coordinate Zn(2+). 2 positions are modified to phosphoserine: Ser-157 and Ser-162. Disordered regions lie at residues 158 to 207 and 241 to 290; these read VQDL…NAPL and TDAA…DKKK. A Phosphothreonine modification is found at Thr-181. Phosphoserine occurs at positions 186, 257, and 269. Residues 254–267 show a composition bias toward low complexity; sequence PRGSPSPASVSSGR. The segment covering 274 to 289 has biased composition (basic and acidic residues); that stretch reads SPSEQRERKSLADDKK. Positions 310–570 constitute a Protein kinase domain; sequence VQLLKRIGTG…PQILATIELL (261 aa). Residues 316–324 and Lys-336 contribute to the ATP site; that span reads IGTGSFGTV. Thr-318 bears the Phosphothreonine mark. Asp-429 serves as the catalytic Proton acceptor.

The protein belongs to the protein kinase superfamily. TKL Ser/Thr protein kinase family. RAF subfamily. As to quaternary structure, interacts with TH1L/NELFD. Zn(2+) is required as a cofactor. In terms of processing, dephosphorylation by the SHOC2-MRAS-PP1c (SMP) complex consisting of SHOC2, GTP-bound M-Ras/MRAS and the catalytic subunit of protein phosphatase 1 (PPP1CA, PPP1CB or PPP1CC); this relieves inactivation and stimulates kinase activity.

The catalysed reaction is L-seryl-[protein] + ATP = O-phospho-L-seryl-[protein] + ADP + H(+). The enzyme catalyses L-threonyl-[protein] + ATP = O-phospho-L-threonyl-[protein] + ADP + H(+). In terms of biological role, involved in the transduction of mitogenic signals from the cell membrane to the nucleus. May also regulate the TOR signaling cascade. Phosphorylates PFKFB2. The polypeptide is Serine/threonine-protein kinase A-Raf (ARAF) (Sus scrofa (Pig)).